The chain runs to 249 residues: 3-deoxy-D-manno-octulosonic acid kinase (249 aa).

D175 is an active-site residue.

It belongs to the protein kinase superfamily. KdkA/RfaP family.

The protein localises to the cell inner membrane. It carries out the reaction an alpha-Kdo-(2-&gt;6)-lipid IVA + ATP = a 4-O-phospho-alpha-Kdo-(2-&gt;6)-lipid IVA + ADP + H(+). It functions in the pathway bacterial outer membrane biogenesis; LPS core biosynthesis. Functionally, catalyzes the ATP-dependent phosphorylation of the 3-deoxy-D-manno-octulosonic acid (Kdo) residue in Kdo-lipid IV(A) at the 4-OH position. The sequence is that of 3-deoxy-D-manno-octulosonic acid kinase from Xanthomonas euvesicatoria pv. vesicatoria (strain 85-10) (Xanthomonas campestris pv. vesicatoria).